The following is a 201-amino-acid chain: Sorting nexin-10 (201 aa).

The interval 8–125 (EEFVSVWVRD…SLHLFLQSHL (118 aa)) is required for interaction with ATP6V1D. Residues 10–127 (FVSVWVRDPR…HLFLQSHLNS (118 aa)) form the PX domain. 3 residues coordinate a 1,2-diacyl-sn-glycero-3-phospho-(1D-myo-inositol-3-phosphate): Arg-53, Lys-79, and Arg-94. The tract at residues 155-201 (RFPEEEEEGKKDADVEYDSESSSSGLGHSSDDSSSHGCKTSPALQES) is disordered.

This sequence belongs to the sorting nexin family. As to quaternary structure, interacts with ATP6V1D; may play a role in ciliogenesis. In terms of tissue distribution, expressed in femur, calvariae and teeth.

It is found in the cytoplasm. Its subcellular location is the endosome membrane. It localises to the cytoskeleton. The protein localises to the microtubule organizing center. The protein resides in the centrosome. Its function is as follows. Probable phosphoinositide-binding protein involved in protein sorting and membrane trafficking in endosomes. Plays a role in cilium biogenesis through regulation of the transport and the localization of proteins to the cilium. Required for the localization to the cilium of V-ATPase subunit ATP6V1D and ATP6V0D1, and RAB8A. Involved in osteoclast differentiation and therefore bone resorption. This Mus musculus (Mouse) protein is Sorting nexin-10 (Snx10).